The primary structure comprises 459 residues: Cysteine--tRNA ligase (459 aa).

Cys-28 lines the Zn(2+) pocket. The short motif at 30–40 is the 'HIGH' region element; sequence ITIYDLCHIGH. Positions 209, 234, and 238 each coordinate Zn(2+). A 'KMSKS' region motif is present at residues 266 to 270; sequence KMSKS. An ATP-binding site is contributed by Lys-269.

The protein belongs to the class-I aminoacyl-tRNA synthetase family. Monomer. The cofactor is Zn(2+).

The protein localises to the cytoplasm. The enzyme catalyses tRNA(Cys) + L-cysteine + ATP = L-cysteinyl-tRNA(Cys) + AMP + diphosphate. This Shewanella denitrificans (strain OS217 / ATCC BAA-1090 / DSM 15013) protein is Cysteine--tRNA ligase.